The sequence spans 238 residues: Probable transcriptional regulatory protein SSU05_0402 (238 aa).

Belongs to the TACO1 family. YeeN subfamily.

Its subcellular location is the cytoplasm. This is Probable transcriptional regulatory protein SSU05_0402 from Streptococcus suis (strain 05ZYH33).